Consider the following 351-residue polypeptide: Succinylglutamate desuccinylase (351 aa).

The Zn(2+) site is built by His73, Glu76, and His168. Residue Glu231 is part of the active site.

The protein belongs to the AspA/AstE family. Succinylglutamate desuccinylase subfamily. Requires Zn(2+) as cofactor.

The enzyme catalyses N-succinyl-L-glutamate + H2O = L-glutamate + succinate. It functions in the pathway amino-acid degradation; L-arginine degradation via AST pathway; L-glutamate and succinate from L-arginine: step 5/5. In terms of biological role, transforms N(2)-succinylglutamate into succinate and glutamate. The chain is Succinylglutamate desuccinylase from Burkholderia lata (strain ATCC 17760 / DSM 23089 / LMG 22485 / NCIMB 9086 / R18194 / 383).